Reading from the N-terminus, the 219-residue chain is Swarming motility regulation protein RssB (219 aa).

Residues 2–116 form the Response regulatory domain; that stretch reads NILLVEDDLQ…ELISRVKAVN (115 aa). Asp51 is subject to 4-aspartylphosphate. Positions 124–218 form a DNA-binding region, ompR/PhoB-type; the sequence is SQTWSLGALY…VRGIGYLLKK (95 aa).

It localises to the cytoplasm. Its function is as follows. Member of the two-component regulatory system RssA/RssB involved in regulation of swarming motility which has been shown to be inhibited by saturated fatty acids. RssA/RssB regulates cellular fatty acid composition, hemolysin production and cell surface topography. RssA/RssB negatively regulates the activity of SlhBA. It can also act as a negative regulator for the control of the swarming initiation. RssB binds its own promoter. The protein is Swarming motility regulation protein RssB (rssB) of Serratia marcescens.